A 566-amino-acid polypeptide reads, in one-letter code: DNA helicase/primase (566 aa).

Residues Cys-17, Cys-20, Cys-36, and Cys-39 each contribute to the Zn(2+) site. A C4-like; zinc ribbon fold zinc finger spans residues 17-39 (CDNCGSSDGNSLFSDGHTFCYVC). The region spanning 151 to 238 (KKIVVTEGEI…RVAVLPCKDA (88 aa)) is the Toprim domain. 3 residues coordinate Mg(2+): Glu-157, Asp-207, and Asp-237. The region spanning 281–548 (SEESVGLLFS…TGWLEPSSYS (268 aa)) is the SF4 helicase domain. Position 312–319 (312–319 (SGSGMGKS)) interacts with ATP. The tract at residues 543–566 (EPSSYSGEEESHSESTDWSNDTDF) is disordered. The binding to viral DNA polymerase stretch occupies residues 550–566 (EEESHSESTDWSNDTDF).

The protein belongs to the Teseptimavirus DNA helicase/primase family. As to quaternary structure, homohexamer. Assembles as a hexamer onto linear or circular ssDNA in the presence of ATP or dTTP. Present in a mixture of heptamers and hexamers in the absence of DNA. Interacts (via C-terminus) with the viral DNA polymerase that is bound to DNA; this interaction is essential to initiate leading-strand DNA synthesis. The priming complex consists of 2 DNA polymerases and 1 helicase-primase hexamer that assemble on the DNA template. Interacts with the single-stranded DNA-binding protein. Part of the replicase complex that includes the DNA polymerase, thioredoxin, the primase/helicase and the single-stranded DNA binding protein. The cofactor is Mg(2+).

It carries out the reaction ATP + H2O = ADP + phosphate + H(+). ATP-dependent DNA helicase and primase essential for viral DNA replication and recombination. The helicase moves 5' -&gt; 3' on the lagging strand template, unwinding the DNA duplex ahead of the leading strand polymerase at the replication fork and generating ssDNA for both leading and lagging strand synthesis. ATP or dTTP hydrolysis propels each helicase domain to translocate 2 nt per step sequentially along DNA. Mediates strand transfer when a joint molecule is available and participates in recombinational DNA repair through its role in strand exchange. Primase activity synthesizes short RNA primers at the sequence 5'-GTC-3' on the lagging strand that the polymerase elongates using dNTPs and providing the primase is still present. This Escherichia phage T7 (Bacteriophage T7) protein is DNA helicase/primase.